The chain runs to 315 residues: High mobility group protein hmg-12 (315 aa).

The interval 57 to 315 is disordered; it reads VKNETDSEAV…AIDAFFDGSD (259 aa). The span at 77–86 shows a compositional bias: polar residues; that stretch reads ANDSPANTND. Positions 118–128 form a DNA-binding region, a.T hook 1; it reads PVKKGRGRPIK. Composition is skewed to low complexity over residues 147–160 and 196–205; these read AQTPAADTDAIDTA and AADTDAIDTA.

Belongs to the HMGA family.

It localises to the nucleus. Functionally, transcriptional regulator. Binds to specific sequence motifs in regulatory elements. May recruit transcription factors, or may induce structural changes in chromatin, to thereby modulate embryonic expression of ATP-dependent chaperone cdc-48.1. The sequence is that of High mobility group protein hmg-12 from Caenorhabditis elegans.